Here is a 318-residue protein sequence, read N- to C-terminus: Ubiquinol oxidase, mitochondrial (318 aa).

The N-terminal 46 residues, 1–46 (MTVMRGLLNGGRYGNRYIWTAISLRHPEVMEGNGLESAVMQWRRML), are a transit peptide targeting the mitochondrion. A helical transmembrane segment spans residues 143-163 (AMMLETVAAVPGMVGGMLLHL). Residues E147, E186, and H189 each contribute to the Fe cation site. A helical membrane pass occupies residues 205–225 (LLVLAVQGVFFNSFFVLYVLS). E237, E288, and H291 together coordinate Fe cation.

The protein belongs to the alternative oxidase family. As to quaternary structure, homodimer; disulfide-linked. Fe cation is required as a cofactor.

It is found in the mitochondrion inner membrane. It catalyses the reaction 2 a ubiquinol + O2 = 2 a ubiquinone + 2 H2O. Catalyzes the cyanide-resistant oxidation of ubiquinol and the reduction of molecular oxygen to water, but does not translocate protons and consequently is not linked to oxidative phosphorylation. May increase respiration when the cytochrome respiratory pathway is restricted, or in response to low temperatures. The sequence is that of Ubiquinol oxidase, mitochondrial (AOMI 1) from Mangifera indica (Mango).